The primary structure comprises 714 residues: Phenylalanine 2-monooxygenase precursor (714 aa).

A propeptide spans 1 to 15 (MGVTVIPRLLGLKDE) (removed in mature form; occupies the channel of the substrate amino acid from the outside of the protein to the interior flavin ring in the precursor). Residues G2, G68, and 95-96 (EA) contribute to the FAD site. Residues 108–109 (IK) constitute a propeptide, linker peptide. Residues R120, 141-144 (GAMR), and V375 each bind FAD. R144 is a substrate binding site. Y537 lines the substrate pocket. FAD-binding positions include 652 to 653 (SD) and 660 to 662 (GWL). G660 serves as a coordination point for substrate.

The protein belongs to the phenylalanine 2-monooxygenase family. In terms of assembly, heterotetramer composed of 2 alpha and 2 beta subunits. FAD is required as a cofactor. Post-translationally, proteolytically cleaved to yield the active enzyme. Cleavage of the linkage between the 2 subunits causes reshaping of the oxygen channel and the hydrophobic environment around the flavin ring. Removal of the prosequence causes opening of the amino acid channel.

The enzyme catalyses L-phenylalanine + O2 = 2-phenylacetamide + CO2 + H2O. In terms of biological role, catalyzes both oxygenative decarboxylation and oxidative deamination, depending on the substrate used. Has high activity for L-Phe and L-Tyr, but relatively low activities for L-Met and L-Trp. L-Phe is mainly oxygenated and L-Met is mainly oxidized. This Pseudomonas sp protein is Phenylalanine 2-monooxygenase precursor.